Here is a 158-residue protein sequence, read N- to C-terminus: uncharacterized protein (158 aa).

Residues 77-132 (AIKRNKIGGSKRSEVHSNRSKNYSSKKFRSQKCRRSRQKKRQNKKPNNSRFISSNK) form a disordered region. Over residues 100–120 (SSKKFRSQKCRRSRQKKRQNK) the composition is skewed to basic residues.

This is an uncharacterized protein from Acanthamoeba polyphaga mimivirus (APMV).